Here is a 219-residue protein sequence, read N- to C-terminus: Ras-related protein Rab-3 (219 aa).

GTP is bound by residues 29–37 (GNSSVGKTS), 48–54 (TSAFVST), 77–81 (DTAGQ), 135–138 (NKCD), and 165–167 (SAK). Residues 51–59 (FVSTVGIDF) carry the Effector region motif. The tract at residues 191 to 219 (LDKDPQQQPKGQKLEANPTQKPAQQQCNC) is disordered. A compositionally biased stretch (polar residues) spans 207–219 (NPTQKPAQQQCNC). Residues Cys-217 and Cys-219 are each lipidated (S-geranylgeranyl cysteine). Cys-219 is subject to Cysteine methyl ester.

The protein belongs to the small GTPase superfamily. Rab family.

Its subcellular location is the cell membrane. Involved in exocytosis by regulating a late step in synaptic vesicle fusion. Could play a role in neurotransmitter release by regulating membrane flow in the nerve terminal. Plays a role in the recruitment of endophilin unc-57 to synaptic vesicles. Probably by controlling dense-core vesicle trafficking, plays a role in the AVG neuron-mediated formation of the right axon tract of the ventral nerve cord. The polypeptide is Ras-related protein Rab-3 (rab-3) (Caenorhabditis elegans).